Consider the following 287-residue polypeptide: F-actin-capping protein subunit beta (287 aa).

An N-acetylserine modification is found at S2. S85 and S92 each carry phosphoserine.

Belongs to the F-actin-capping protein beta subunit family. In terms of assembly, component of the F-actin capping complex, composed of a heterodimer of an alpha and a beta subunit. Interacts with BSP1 (via C-terminus); leading to recruitment of the F-actin capping complex to actin cortical patches and the acomyosin contractile ring.

The protein localises to the cytoplasm. It localises to the cytoskeleton. It is found in the actin patch. Its subcellular location is the bud. The protein resides in the bud tip. F-actin-capping proteins bind in a Ca(2+)-independent manner to the fast growing ends of actin filaments (barbed end) thereby blocking the exchange of subunits at these ends. Unlike other capping proteins (such as gelsolin and severin), these proteins do not sever actin filaments. The protein is F-actin-capping protein subunit beta (CAP2) of Saccharomyces cerevisiae (strain ATCC 204508 / S288c) (Baker's yeast).